Consider the following 311-residue polypeptide: Dihydroorotate dehydrogenase A (fumarate) (311 aa).

Residues Ser-19 and 43-44 (KS) each bind FMN. Residues Lys-43, 67–71 (NSMGL), and Asn-127 each bind substrate. Residue Asn-127 participates in FMN binding. Cys-130 serves as the catalytic Nucleophile. 2 residues coordinate FMN: Lys-164 and Val-192. Position 193-194 (193-194 (NS)) interacts with substrate. FMN-binding positions include Gly-221, 249–250 (GG), and 271–272 (GT).

Belongs to the dihydroorotate dehydrogenase family. Type 1 subfamily. Homodimer. FMN serves as cofactor.

Its subcellular location is the cytoplasm. It carries out the reaction (S)-dihydroorotate + fumarate = orotate + succinate. The protein operates within pyrimidine metabolism; UMP biosynthesis via de novo pathway. In terms of biological role, catalyzes the conversion of dihydroorotate to orotate with fumarate as the electron acceptor. This chain is Dihydroorotate dehydrogenase A (fumarate) (pyrDA), found in Lactococcus lactis subsp. lactis (strain IL1403) (Streptococcus lactis).